The sequence spans 202 residues: ATP synthase subunit b (202 aa).

Residues 9-29 (TTLSLCLAVCVVVIAVGTGWA) traverse the membrane as a helical segment.

The protein belongs to the ATPase B chain family. In terms of assembly, F-type ATPases have 2 components, F(1) - the catalytic core - and F(0) - the membrane proton channel. F(1) has five subunits: alpha(3), beta(3), gamma(1), delta(1), epsilon(1). F(0) has three main subunits: a(1), b(2) and c(10-14). The alpha and beta chains form an alternating ring which encloses part of the gamma chain. F(1) is attached to F(0) by a central stalk formed by the gamma and epsilon chains, while a peripheral stalk is formed by the delta and b chains.

It is found in the cell inner membrane. In terms of biological role, f(1)F(0) ATP synthase produces ATP from ADP in the presence of a proton or sodium gradient. F-type ATPases consist of two structural domains, F(1) containing the extramembraneous catalytic core and F(0) containing the membrane proton channel, linked together by a central stalk and a peripheral stalk. During catalysis, ATP synthesis in the catalytic domain of F(1) is coupled via a rotary mechanism of the central stalk subunits to proton translocation. Component of the F(0) channel, it forms part of the peripheral stalk, linking F(1) to F(0). In Pelobacter propionicus (strain DSM 2379 / NBRC 103807 / OttBd1), this protein is ATP synthase subunit b.